Consider the following 122-residue polypeptide: Large ribosomal subunit protein uL18 (122 aa).

The disordered stretch occupies residues 1-25; it reads MSQISRKQQTQKRHRRLRRHITGTS. Residues 9 to 21 show a composition bias toward basic residues; the sequence is QTQKRHRRLRRHI.

The protein belongs to the universal ribosomal protein uL18 family. As to quaternary structure, part of the 50S ribosomal subunit; part of the 5S rRNA/L5/L18/L25 subcomplex. Contacts the 5S and 23S rRNAs.

In terms of biological role, this is one of the proteins that bind and probably mediate the attachment of the 5S RNA into the large ribosomal subunit, where it forms part of the central protuberance. In Synechococcus sp. (strain CC9605), this protein is Large ribosomal subunit protein uL18.